The primary structure comprises 196 residues: MELEKFKDANKDELSMIEVAHEILHQRGETMAFADLTNEIQVYLGKSDEEIRDRLAQFYTDLNIDGSFISLGDNVWGLRSWYPYDSIDEALVHGEDEEDEERPRKKRKKVNAFLADVSDDDDVIDYDDDDPEDEDLDNDYDDEDDDDDEGSHELKQYTKDLDDIDDGDDPEDELADGIEGQLTEFSDADLDEENQD.

Residues 14-81 (LSMIEVAHEI…GDNVWGLRSW (68 aa)) form the HTH HARE-type domain. The segment covering 119–150 (DDDDVIDYDDDDPEDEDLDNDYDDEDDDDDEG) has biased composition (acidic residues). The tract at residues 119-196 (DDDDVIDYDD…DADLDEENQD (78 aa)) is disordered. Residues 151–161 (SHELKQYTKDL) are compositionally biased toward basic and acidic residues. Composition is skewed to acidic residues over residues 162–176 (DDIDDGDDPEDELAD) and 186–196 (SDADLDEENQD).

The protein belongs to the RpoE family. As to quaternary structure, RNAP is composed of a core of 2 alpha, a beta and a beta' subunits. The core is associated with a delta subunit and one of several sigma factors.

Participates in both the initiation and recycling phases of transcription. In the presence of the delta subunit, RNAP displays an increased specificity of transcription, a decreased affinity for nucleic acids, and an increased efficiency of RNA synthesis because of enhanced recycling. The chain is Probable DNA-directed RNA polymerase subunit delta from Ligilactobacillus salivarius (strain UCC118) (Lactobacillus salivarius).